The sequence spans 285 residues: uncharacterized protein (285 aa).

The signal sequence occupies residues 1-25 (MVKKWLIQFAVMLSVLSTFTYSASA).

This is an uncharacterized protein from Bacillus subtilis (strain 168).